Reading from the N-terminus, the 139-residue chain is Large ribosomal subunit protein uL22 (139 aa).

The disordered stretch occupies residues 118–139 (VEVESRPKKVASKSKSQKGSAR). Residues 125–139 (KKVASKSKSQKGSAR) are compositionally biased toward basic residues.

The protein belongs to the universal ribosomal protein uL22 family. Part of the 50S ribosomal subunit.

Its function is as follows. This protein binds specifically to 23S rRNA; its binding is stimulated by other ribosomal proteins, e.g. L4, L17, and L20. It is important during the early stages of 50S assembly. It makes multiple contacts with different domains of the 23S rRNA in the assembled 50S subunit and ribosome. The globular domain of the protein is located near the polypeptide exit tunnel on the outside of the subunit, while an extended beta-hairpin is found that lines the wall of the exit tunnel in the center of the 70S ribosome. In Saccharopolyspora erythraea (strain ATCC 11635 / DSM 40517 / JCM 4748 / NBRC 13426 / NCIMB 8594 / NRRL 2338), this protein is Large ribosomal subunit protein uL22.